A 341-amino-acid polypeptide reads, in one-letter code: Formimidoylglutamase (341 aa).

Mn(2+)-binding residues include histidine 133, aspartate 162, histidine 164, aspartate 166, cysteine 253, and aspartate 255.

Belongs to the arginase family. Requires Mn(2+) as cofactor.

It carries out the reaction N-formimidoyl-L-glutamate + H2O = formamide + L-glutamate. The protein operates within amino-acid degradation; L-histidine degradation into L-glutamate; L-glutamate from N-formimidoyl-L-glutamate (hydrolase route): step 1/1. Functionally, catalyzes the conversion of N-formimidoyl-L-glutamate to L-glutamate and formamide. This chain is Formimidoylglutamase, found in Aromatoleum aromaticum (strain DSM 19018 / LMG 30748 / EbN1) (Azoarcus sp. (strain EbN1)).